Here is a 331-residue protein sequence, read N- to C-terminus: 6-phosphogluconolactonase (331 aa).

Belongs to the cycloisomerase 2 family.

It catalyses the reaction 6-phospho-D-glucono-1,5-lactone + H2O = 6-phospho-D-gluconate + H(+). It participates in carbohydrate degradation; pentose phosphate pathway; D-ribulose 5-phosphate from D-glucose 6-phosphate (oxidative stage): step 2/3. Functionally, catalyzes the hydrolysis of 6-phosphogluconolactone to 6-phosphogluconate. The chain is 6-phosphogluconolactonase from Salmonella agona (strain SL483).